A 146-amino-acid polypeptide reads, in one-letter code: Large ribosomal subunit protein bL19 (146 aa).

The protein belongs to the bacterial ribosomal protein bL19 family.

Functionally, this protein is located at the 30S-50S ribosomal subunit interface and may play a role in the structure and function of the aminoacyl-tRNA binding site. This chain is Large ribosomal subunit protein bL19, found in Bartonella quintana (strain Toulouse) (Rochalimaea quintana).